We begin with the raw amino-acid sequence, 105 residues long: Small ribosomal subunit protein uS10 (105 aa).

It belongs to the universal ribosomal protein uS10 family. In terms of assembly, part of the 30S ribosomal subunit.

In terms of biological role, involved in the binding of tRNA to the ribosomes. This chain is Small ribosomal subunit protein uS10, found in Nitratidesulfovibrio vulgaris (strain DSM 19637 / Miyazaki F) (Desulfovibrio vulgaris).